The chain runs to 221 residues: Thiamine-phosphate synthase (221 aa).

Residues 44–48 (QFREK) and N79 contribute to the 4-amino-2-methyl-5-(diphosphooxymethyl)pyrimidine site. D80 and D99 together coordinate Mg(2+). Residue S117 coordinates 4-amino-2-methyl-5-(diphosphooxymethyl)pyrimidine. 143–145 (TSS) lines the 2-[(2R,5Z)-2-carboxy-4-methylthiazol-5(2H)-ylidene]ethyl phosphate pocket. K146 is a 4-amino-2-methyl-5-(diphosphooxymethyl)pyrimidine binding site. Residues G175 and 195 to 196 (IS) contribute to the 2-[(2R,5Z)-2-carboxy-4-methylthiazol-5(2H)-ylidene]ethyl phosphate site.

The protein belongs to the thiamine-phosphate synthase family. The cofactor is Mg(2+).

The enzyme catalyses 2-[(2R,5Z)-2-carboxy-4-methylthiazol-5(2H)-ylidene]ethyl phosphate + 4-amino-2-methyl-5-(diphosphooxymethyl)pyrimidine + 2 H(+) = thiamine phosphate + CO2 + diphosphate. It catalyses the reaction 2-(2-carboxy-4-methylthiazol-5-yl)ethyl phosphate + 4-amino-2-methyl-5-(diphosphooxymethyl)pyrimidine + 2 H(+) = thiamine phosphate + CO2 + diphosphate. The catalysed reaction is 4-methyl-5-(2-phosphooxyethyl)-thiazole + 4-amino-2-methyl-5-(diphosphooxymethyl)pyrimidine + H(+) = thiamine phosphate + diphosphate. The protein operates within cofactor biosynthesis; thiamine diphosphate biosynthesis; thiamine phosphate from 4-amino-2-methyl-5-diphosphomethylpyrimidine and 4-methyl-5-(2-phosphoethyl)-thiazole: step 1/1. Condenses 4-methyl-5-(beta-hydroxyethyl)thiazole monophosphate (THZ-P) and 2-methyl-4-amino-5-hydroxymethyl pyrimidine pyrophosphate (HMP-PP) to form thiamine monophosphate (TMP). In Geobacillus kaustophilus (strain HTA426), this protein is Thiamine-phosphate synthase.